Here is a 293-residue protein sequence, read N- to C-terminus: 4-diphosphocytidyl-2-C-methyl-D-erythritol kinase (293 aa).

K10 is a catalytic residue. An ATP-binding site is contributed by 94 to 104 (PVSAGLAGGSS). D136 is a catalytic residue.

The protein belongs to the GHMP kinase family. IspE subfamily.

The enzyme catalyses 4-CDP-2-C-methyl-D-erythritol + ATP = 4-CDP-2-C-methyl-D-erythritol 2-phosphate + ADP + H(+). Its pathway is isoprenoid biosynthesis; isopentenyl diphosphate biosynthesis via DXP pathway; isopentenyl diphosphate from 1-deoxy-D-xylulose 5-phosphate: step 3/6. Catalyzes the phosphorylation of the position 2 hydroxy group of 4-diphosphocytidyl-2C-methyl-D-erythritol. This Listeria monocytogenes serotype 4b (strain CLIP80459) protein is 4-diphosphocytidyl-2-C-methyl-D-erythritol kinase.